A 247-amino-acid polypeptide reads, in one-letter code: Ribonuclease PH (247 aa).

Phosphate is bound by residues R87 and 125–127; that span reads GTR.

The protein belongs to the RNase PH family. Homohexameric ring arranged as a trimer of dimers.

The enzyme catalyses tRNA(n+1) + phosphate = tRNA(n) + a ribonucleoside 5'-diphosphate. In terms of biological role, phosphorolytic 3'-5' exoribonuclease that plays an important role in tRNA 3'-end maturation. Removes nucleotide residues following the 3'-CCA terminus of tRNAs; can also add nucleotides to the ends of RNA molecules by using nucleoside diphosphates as substrates, but this may not be physiologically important. Probably plays a role in initiation of 16S rRNA degradation (leading to ribosome degradation) during starvation. The chain is Ribonuclease PH from Frankia casuarinae (strain DSM 45818 / CECT 9043 / HFP020203 / CcI3).